A 69-amino-acid polypeptide reads, in one-letter code: Putative antitoxin AF_1481 (69 aa).

It belongs to the UPF0330 family.

Functionally, possibly the antitoxin component of a type II toxin-antitoxin (TA) system. The protein is Putative antitoxin AF_1481 of Archaeoglobus fulgidus (strain ATCC 49558 / DSM 4304 / JCM 9628 / NBRC 100126 / VC-16).